The primary structure comprises 220 residues: Ribose-5-phosphate isomerase A (220 aa).

Residues 28 to 31 (TGST), 81 to 84 (DGAD), and 94 to 97 (KGGG) contribute to the substrate site. Residue glutamate 103 is the Proton acceptor of the active site. Residue lysine 121 participates in substrate binding.

Belongs to the ribose 5-phosphate isomerase family. In terms of assembly, homodimer.

The enzyme catalyses aldehydo-D-ribose 5-phosphate = D-ribulose 5-phosphate. Its pathway is carbohydrate degradation; pentose phosphate pathway; D-ribose 5-phosphate from D-ribulose 5-phosphate (non-oxidative stage): step 1/1. Functionally, catalyzes the reversible conversion of ribose-5-phosphate to ribulose 5-phosphate. The polypeptide is Ribose-5-phosphate isomerase A (Yersinia enterocolitica serotype O:8 / biotype 1B (strain NCTC 13174 / 8081)).